A 685-amino-acid chain; its full sequence is Threonine--tRNA ligase (685 aa).

The region spanning Met1–Ala65 is the TGS domain. Residues Asp262–Pro568 are catalytic. Residues Cys367, His418, and His545 each coordinate Zn(2+).

The protein belongs to the class-II aminoacyl-tRNA synthetase family. As to quaternary structure, homodimer. Zn(2+) serves as cofactor.

The protein resides in the cytoplasm. It catalyses the reaction tRNA(Thr) + L-threonine + ATP = L-threonyl-tRNA(Thr) + AMP + diphosphate + H(+). Catalyzes the attachment of threonine to tRNA(Thr) in a two-step reaction: L-threonine is first activated by ATP to form Thr-AMP and then transferred to the acceptor end of tRNA(Thr). Also edits incorrectly charged L-seryl-tRNA(Thr). The protein is Threonine--tRNA ligase of Rhodococcus jostii (strain RHA1).